The following is a 382-amino-acid chain: MTKPSSKASRKPVTKSGRNSKRSRSGSSKGDAQVARAINNQKPGLHPRNLHRDGYDFDKLTKVSPVLTPYVQPNPYGNLSIDFADPQAVKALNAAILKLDYQIDNWDIPEGFLCPPIPGRVDYLHYIYDLLAGVEEFENKSETEMEGQNVPPVNSHTIKPKKMKIKALDIGTGANAIYPLLGIQTYGWRFVASDVDPISLANVKAIVEGNNCLLGKLEVRLQNDHQKVFSGIIKPDDRFDITLCNPPFHASLKEASEGSQRKLKNLAENRASKGHKLEPKAPKDKSQLNFGGQKAELWCEGGEKQFLHNMICESKVFATQCLWFTSLVSKKENLEACYTELKRVGAITVKTIDMAQGNKLTRVLAWSFLTPSQRGLWAKYRS.

Disordered regions lie at residues 1–53 (MTKP…LHRD) and 269–288 (NRAS…KSQL). The span at 8–24 (ASRKPVTKSGRNSKRSR) shows a compositional bias: basic residues. A compositionally biased stretch (basic and acidic residues) spans 269 to 286 (NRASKGHKLEPKAPKDKS).

This sequence belongs to the methyltransferase superfamily. METTL16/RlmF family.

The protein resides in the cytoplasm. It carries out the reaction adenosine(1618) in 23S rRNA + S-adenosyl-L-methionine = N(6)-methyladenosine(1618) in 23S rRNA + S-adenosyl-L-homocysteine + H(+). Specifically methylates the adenine in position 1618 of 23S rRNA. The polypeptide is Ribosomal RNA large subunit methyltransferase F (Shewanella woodyi (strain ATCC 51908 / MS32)).